The chain runs to 139 residues: MAGNNISGEELIEQANYMKSLIDSLNSRIASLSATLSEANQTLSFLKDNESDNSKQLRIMIGSGIYADATIKKDKFIVPVGSGVFIEEERERTIKRLSENLKDLNDSINRLNQQKKELENNYNMLLMQIQELDNNVRQS.

The protein belongs to the prefoldin subunit alpha family. Heterohexamer of two alpha and four beta subunits.

It localises to the cytoplasm. Functionally, molecular chaperone capable of stabilizing a range of proteins. Seems to fulfill an ATP-independent, HSP70-like function in archaeal de novo protein folding. The chain is Prefoldin subunit alpha from Picrophilus torridus (strain ATCC 700027 / DSM 9790 / JCM 10055 / NBRC 100828 / KAW 2/3).